The sequence spans 371 residues: Queuine tRNA-ribosyltransferase (371 aa).

The active-site Proton acceptor is the D90. Substrate contacts are provided by residues 90–94 (DSGGF), D144, Q188, and G215. Residues 246–252 (GVGTPED) are RNA binding. The Nucleophile role is filled by D265. An RNA binding; important for wobble base 34 recognition region spans residues 270–274 (TRNAR). Residues C303, C305, C308, and H334 each coordinate Zn(2+).

It belongs to the queuine tRNA-ribosyltransferase family. In terms of assembly, homodimer. Within each dimer, one monomer is responsible for RNA recognition and catalysis, while the other monomer binds to the replacement base PreQ1. Zn(2+) is required as a cofactor.

The enzyme catalyses 7-aminomethyl-7-carbaguanine + guanosine(34) in tRNA = 7-aminomethyl-7-carbaguanosine(34) in tRNA + guanine. It participates in tRNA modification; tRNA-queuosine biosynthesis. Catalyzes the base-exchange of a guanine (G) residue with the queuine precursor 7-aminomethyl-7-deazaguanine (PreQ1) at position 34 (anticodon wobble position) in tRNAs with GU(N) anticodons (tRNA-Asp, -Asn, -His and -Tyr). Catalysis occurs through a double-displacement mechanism. The nucleophile active site attacks the C1' of nucleotide 34 to detach the guanine base from the RNA, forming a covalent enzyme-RNA intermediate. The proton acceptor active site deprotonates the incoming PreQ1, allowing a nucleophilic attack on the C1' of the ribose to form the product. After dissociation, two additional enzymatic reactions on the tRNA convert PreQ1 to queuine (Q), resulting in the hypermodified nucleoside queuosine (7-(((4,5-cis-dihydroxy-2-cyclopenten-1-yl)amino)methyl)-7-deazaguanosine). In Neisseria meningitidis serogroup A / serotype 4A (strain DSM 15465 / Z2491), this protein is Queuine tRNA-ribosyltransferase.